Consider the following 176-residue polypeptide: Ribosome maturation factor RimM (176 aa).

Residues 93 to 172 (KDEFFQFDII…EILVKGARDI (80 aa)) form the PRC barrel domain.

The protein belongs to the RimM family. Binds ribosomal protein uS19.

The protein localises to the cytoplasm. An accessory protein needed during the final step in the assembly of 30S ribosomal subunit, possibly for assembly of the head region. Essential for efficient processing of 16S rRNA. May be needed both before and after RbfA during the maturation of 16S rRNA. It has affinity for free ribosomal 30S subunits but not for 70S ribosomes. This is Ribosome maturation factor RimM from Campylobacter concisus (strain 13826).